We begin with the raw amino-acid sequence, 360 residues long: DNA replication and repair protein RecF (360 aa).

Residue 30 to 37 (GDNAQGKT) coordinates ATP.

Belongs to the RecF family.

It localises to the cytoplasm. Functionally, the RecF protein is involved in DNA metabolism; it is required for DNA replication and normal SOS inducibility. RecF binds preferentially to single-stranded, linear DNA. It also seems to bind ATP. The protein is DNA replication and repair protein RecF of Lachnoclostridium phytofermentans (strain ATCC 700394 / DSM 18823 / ISDg) (Clostridium phytofermentans).